We begin with the raw amino-acid sequence, 123 residues long: UPF0102 protein Fjoh_1217 (123 aa).

Belongs to the UPF0102 family.

This Flavobacterium johnsoniae (strain ATCC 17061 / DSM 2064 / JCM 8514 / BCRC 14874 / CCUG 350202 / NBRC 14942 / NCIMB 11054 / UW101) (Cytophaga johnsonae) protein is UPF0102 protein Fjoh_1217.